A 188-amino-acid polypeptide reads, in one-letter code: Actin-related protein 2/3 complex subunit 3 (188 aa).

It belongs to the ARPC3 family. As to quaternary structure, component of the Arp2/3 complex.

Its subcellular location is the cytoplasm. The protein localises to the cytoskeleton. Functionally, functions as a component of the Arp2/3 complex which is involved in regulation of actin polymerization and together with an activating nucleation-promoting factor (NPF) mediates the formation of branched actin networks. In Entamoeba histolytica (strain ATCC 30459 / HM-1:IMSS / ABRM), this protein is Actin-related protein 2/3 complex subunit 3.